Here is a 234-residue protein sequence, read N- to C-terminus: MTDLTEKNTALEEKIESAVENQQKSIWKEIFAQGIWKNNPAVVQLLGLCPLLAVSSTATNALGLGLATMLVLTCTNTVISLFRQYIPKEIRIPIYVMIIATTVTAVQLLMNAYTYTLYQSLGIFIPLIVTNCIIIGRAEAFASKNSLLHSIWDGFSMGLGMALSLTILGALREIIGQGTIFEGIENLFGEQAKFLTHHIYHTDSSFLLFILPPGAFIGLGLLLAIKNRIDNIKK.

Transmembrane regions (helical) follow at residues 62 to 82 (LGLGLATMLVLTCTNTVISLF), 92 to 112 (IPIYVMIIATTVTAVQLLMNA), 116 to 136 (TLYQSLGIFIPLIVTNCIIIG), 151 to 171 (IWDGFSMGLGMALSLTILGAL), and 205 to 225 (SFLLFILPPGAFIGLGLLLAI).

It belongs to the NqrDE/RnfAE family. In terms of assembly, the complex is composed of six subunits: RnfA, RnfB, RnfC, RnfD, RnfE and RnfG.

The protein localises to the cell inner membrane. Part of a membrane-bound complex that couples electron transfer with translocation of ions across the membrane. The sequence is that of Ion-translocating oxidoreductase complex subunit E from Haemophilus influenzae (strain PittGG).